Consider the following 170-residue polypeptide: Adenine phosphoribosyltransferase (170 aa).

The protein belongs to the purine/pyrimidine phosphoribosyltransferase family. Homodimer.

The protein resides in the cytoplasm. It catalyses the reaction AMP + diphosphate = 5-phospho-alpha-D-ribose 1-diphosphate + adenine. The protein operates within purine metabolism; AMP biosynthesis via salvage pathway; AMP from adenine: step 1/1. Its function is as follows. Catalyzes a salvage reaction resulting in the formation of AMP, that is energically less costly than de novo synthesis. The protein is Adenine phosphoribosyltransferase of Cyanothece sp. (strain PCC 7425 / ATCC 29141).